Consider the following 61-residue polypeptide: Small ribosomal subunit protein uS14 (61 aa).

Residues C24, C27, C40, and C43 each contribute to the Zn(2+) site.

The protein belongs to the universal ribosomal protein uS14 family. Zinc-binding uS14 subfamily. In terms of assembly, part of the 30S ribosomal subunit. Contacts proteins S3 and S10. The cofactor is Zn(2+).

Its function is as follows. Binds 16S rRNA, required for the assembly of 30S particles and may also be responsible for determining the conformation of the 16S rRNA at the A site. The protein is Small ribosomal subunit protein uS14 of Heliobacterium modesticaldum (strain ATCC 51547 / Ice1).